The chain runs to 66 residues: MILVNVHAGNCDNTLKNFKKRLQRELYFRKMKEQRYYETPSAKRVRKAQEAARRQRKFARKKMFDE.

It belongs to the bacterial ribosomal protein bS21 family.

In Rickettsia felis (strain ATCC VR-1525 / URRWXCal2) (Rickettsia azadi), this protein is Small ribosomal subunit protein bS21.